An 87-amino-acid polypeptide reads, in one-letter code: Mitotic-spindle organizing protein 1 (87 aa).

This sequence belongs to the MOZART1 family. Part of the gamma-tubulin complex.

It is found in the cytoplasm. Its subcellular location is the cytoskeleton. The protein localises to the microtubule organizing center. The protein resides in the spindle pole body. Its function is as follows. Required for gamma-tubulin complex recruitment to the microtubule organizing center (MTOC). The sequence is that of Mitotic-spindle organizing protein 1 from Chaetomium globosum (strain ATCC 6205 / CBS 148.51 / DSM 1962 / NBRC 6347 / NRRL 1970) (Soil fungus).